The chain runs to 431 residues: Adenylosuccinate synthetase (431 aa).

Residues 13-19 and 41-43 contribute to the GTP site; these read GDEGKGK and GHT. D14 acts as the Proton acceptor in catalysis. The Mg(2+) site is built by D14 and G41. IMP contacts are provided by residues 14–17, 39–42, T130, R144, Q225, T240, and R304; these read DEGK and NAGH. H42 serves as the catalytic Proton donor. 300-306 contributes to the substrate binding site; it reads ATTGRKR. GTP is bound by residues R306, 332–334, and 415–417; these read KLD and STG.

Belongs to the adenylosuccinate synthetase family. In terms of assembly, homodimer. Requires Mg(2+) as cofactor.

The protein localises to the cytoplasm. It carries out the reaction IMP + L-aspartate + GTP = N(6)-(1,2-dicarboxyethyl)-AMP + GDP + phosphate + 2 H(+). Its pathway is purine metabolism; AMP biosynthesis via de novo pathway; AMP from IMP: step 1/2. Its function is as follows. Plays an important role in the de novo pathway of purine nucleotide biosynthesis. Catalyzes the first committed step in the biosynthesis of AMP from IMP. The chain is Adenylosuccinate synthetase from Shewanella woodyi (strain ATCC 51908 / MS32).